The sequence spans 577 residues: Maltase A1 (577 aa).

The signal sequence occupies residues 1 to 19; that stretch reads MRPQSAACLLLAIVGFVGA. Residues Asn-119 and Asn-151 are each glycosylated (N-linked (GlcNAc...) asparagine). Asp-221 acts as the Nucleophile in catalysis. The N-linked (GlcNAc...) asparagine glycan is linked to Asn-244. Glu-297 (proton donor) is an active-site residue. N-linked (GlcNAc...) asparagine glycosylation is found at Asn-315 and Asn-331.

This sequence belongs to the glycosyl hydrolase 13 family.

It catalyses the reaction Hydrolysis of terminal, non-reducing (1-&gt;4)-linked alpha-D-glucose residues with release of alpha-D-glucose.. The chain is Maltase A1 (Mal-A1) from Drosophila melanogaster (Fruit fly).